Reading from the N-terminus, the 387-residue chain is MAGRSVRVPRRGSAGTQSRGQLAAGRDLLAREQEYKRLNEELEAKTADLVRQAEEVIREQQEVRARPFSALTTSCKEEGGSSSRDLLSSEGTHPWTETKPKTKNTGPVNKIQNRLHSADKERKTNSSAKLKYPDAQTANDVAIPDDFSDFSLAKTISRIEGQLDEDGLPECAEDDSFCGVSKDIGTEAQIRFLKAKLHVMQEELDSVVCECSKKEDKIQDLKSKVKNLEEDCVRQQRTVTSQQSQIEKYKNLFEEANKKCDELQQQLSSVERELESKRRLQKQAASSQSATEVRLNRALEEAEKYKVELSKLRQTNKDITNEDHQKIEVLKSENKKLERQKGELMIGFKKQLKLIDILKRQKMHIEAAKMLSFSEEEFMKALEWGSS.

2 disordered regions span residues 1–25 and 58–133; these read MAGR…LAAG and REQQ…LKYP. Composition is skewed to polar residues over residues 70 to 91 and 103 to 115; these read ALTT…SSEG and KNTG…QNRL. A coiled-coil region spans residues 184-347; it reads IGTEAQIRFL…ERQKGELMIG (164 aa).

Testis-specific.

Its subcellular location is the cytoplasm. The protein resides in the cytoskeleton. The protein localises to the microtubule organizing center. It localises to the centrosome. It is found in the centriolar satellite. In Mus musculus (Mouse), this protein is Testis-expressed protein 9 (Tex9).